We begin with the raw amino-acid sequence, 159 residues long: Endoribonuclease YbeY (159 aa).

Zn(2+)-binding residues include His125, His129, and His135.

The protein belongs to the endoribonuclease YbeY family. Zn(2+) serves as cofactor.

Its subcellular location is the cytoplasm. Functionally, single strand-specific metallo-endoribonuclease involved in late-stage 70S ribosome quality control and in maturation of the 3' terminus of the 16S rRNA. This Thermoanaerobacter pseudethanolicus (strain ATCC 33223 / 39E) (Clostridium thermohydrosulfuricum) protein is Endoribonuclease YbeY.